Here is a 305-residue protein sequence, read N- to C-terminus: Aspartate carbamoyltransferase catalytic subunit (305 aa).

The carbamoyl phosphate site is built by Arg54 and Thr55. Lys82 is an L-aspartate binding site. Carbamoyl phosphate contacts are provided by Arg104, His132, and Gln135. L-aspartate-binding residues include Arg165 and Arg218. Carbamoyl phosphate is bound by residues Gly259 and Pro260.

It belongs to the aspartate/ornithine carbamoyltransferase superfamily. ATCase family. In terms of assembly, heterododecamer (2C3:3R2) of six catalytic PyrB chains organized as two trimers (C3), and six regulatory PyrI chains organized as three dimers (R2).

The enzyme catalyses carbamoyl phosphate + L-aspartate = N-carbamoyl-L-aspartate + phosphate + H(+). It functions in the pathway pyrimidine metabolism; UMP biosynthesis via de novo pathway; (S)-dihydroorotate from bicarbonate: step 2/3. In terms of biological role, catalyzes the condensation of carbamoyl phosphate and aspartate to form carbamoyl aspartate and inorganic phosphate, the committed step in the de novo pyrimidine nucleotide biosynthesis pathway. This Caldicellulosiruptor bescii (strain ATCC BAA-1888 / DSM 6725 / KCTC 15123 / Z-1320) (Anaerocellum thermophilum) protein is Aspartate carbamoyltransferase catalytic subunit.